The following is a 491-amino-acid chain: MAAAEPAWEAVIGLETHVQLGTDSKIFTAASTAFGDDPNTHIDPVVCGLPGTLPVLNQKVLEYAVKAAMALNLNIAEHSKFDRKQYFYPDLPKNYQISQYDEPIAEEGWIEVEVAEKGKDTYLKKIGIERLHMEEDAGKLVHAGSDRLAGSTHSLVDYNRAGVALAEIVSKPDLRTGREAAEYASEIRRIMRYLGVSDGNMQEGSLRCDVNISVRRGPDAPFGTKVEIKNMNSFSAIQKACEYEIKRQIKAYETGEPIVQETRLWDEGKQLTKSMRSKEGASDYRYFPDPDLGPIEVSVDQREAWRSELPELPAVKRHRYADDLGLSQYDARVLTDERPMADYFEAVVAAGADAKLSANWITGDIAAHVNSNRLSYAELPFRPEQLAEMVQLIDGGKISGKIAKEILPELLEKGGSPKAIVDERGLGMISDPAALQAIVDELLAAHPDEVKAFRGGKNKLQGFFVGQLMKKTGGKADPKLANQILSKKLKG.

The protein belongs to the GatB/GatE family. GatB subfamily. Heterotrimer of A, B and C subunits.

The enzyme catalyses L-glutamyl-tRNA(Gln) + L-glutamine + ATP + H2O = L-glutaminyl-tRNA(Gln) + L-glutamate + ADP + phosphate + H(+). The catalysed reaction is L-aspartyl-tRNA(Asn) + L-glutamine + ATP + H2O = L-asparaginyl-tRNA(Asn) + L-glutamate + ADP + phosphate + 2 H(+). In terms of biological role, allows the formation of correctly charged Asn-tRNA(Asn) or Gln-tRNA(Gln) through the transamidation of misacylated Asp-tRNA(Asn) or Glu-tRNA(Gln) in organisms which lack either or both of asparaginyl-tRNA or glutaminyl-tRNA synthetases. The reaction takes place in the presence of glutamine and ATP through an activated phospho-Asp-tRNA(Asn) or phospho-Glu-tRNA(Gln). The protein is Aspartyl/glutamyl-tRNA(Asn/Gln) amidotransferase subunit B of Parasynechococcus marenigrum (strain WH8102).